A 103-amino-acid polypeptide reads, in one-letter code: UPF0473 protein SSA_2239 (103 aa).

Belongs to the UPF0473 family.

The sequence is that of UPF0473 protein SSA_2239 from Streptococcus sanguinis (strain SK36).